The chain runs to 117 residues: Holo-[acyl-carrier-protein] synthase (117 aa).

Positions 8 and 58 each coordinate Mg(2+).

It belongs to the P-Pant transferase superfamily. AcpS family. The cofactor is Mg(2+).

It localises to the cytoplasm. The enzyme catalyses apo-[ACP] + CoA = holo-[ACP] + adenosine 3',5'-bisphosphate + H(+). Functionally, transfers the 4'-phosphopantetheine moiety from coenzyme A to a Ser of acyl-carrier-protein. The chain is Holo-[acyl-carrier-protein] synthase from Latilactobacillus sakei subsp. sakei (strain 23K) (Lactobacillus sakei subsp. sakei).